We begin with the raw amino-acid sequence, 184 residues long: Large ribosomal subunit protein uL22A (184 aa).

K46 participates in a covalent cross-link: Glycyl lysine isopeptide (Lys-Gly) (interchain with G-Cter in ubiquitin). The residue at position 70 (T70) is a Phosphothreonine.

The protein belongs to the universal ribosomal protein uL22 family. In terms of assembly, component of the large ribosomal subunit (LSU). Mature yeast ribosomes consist of a small (40S) and a large (60S) subunit. The 40S small subunit contains 1 molecule of ribosomal RNA (18S rRNA) and 33 different proteins (encoded by 57 genes). The large 60S subunit contains 3 rRNA molecules (25S, 5.8S and 5S rRNA) and 46 different proteins (encoded by 81 genes). uL22 is associated with the polypeptide exit tunnel.

It localises to the cytoplasm. Functionally, component of the ribosome, a large ribonucleoprotein complex responsible for the synthesis of proteins in the cell. The small ribosomal subunit (SSU) binds messenger RNAs (mRNAs) and translates the encoded message by selecting cognate aminoacyl-transfer RNA (tRNA) molecules. The large subunit (LSU) contains the ribosomal catalytic site termed the peptidyl transferase center (PTC), which catalyzes the formation of peptide bonds, thereby polymerizing the amino acids delivered by tRNAs into a polypeptide chain. The nascent polypeptides leave the ribosome through a tunnel in the LSU and interact with protein factors that function in enzymatic processing, targeting, and the membrane insertion of nascent chains at the exit of the ribosomal tunnel. The protein is Large ribosomal subunit protein uL22A of Saccharomyces cerevisiae (strain ATCC 204508 / S288c) (Baker's yeast).